Consider the following 169-residue polypeptide: Adenine phosphoribosyltransferase (169 aa).

The protein belongs to the purine/pyrimidine phosphoribosyltransferase family. As to quaternary structure, homodimer.

The protein resides in the cytoplasm. It carries out the reaction AMP + diphosphate = 5-phospho-alpha-D-ribose 1-diphosphate + adenine. It participates in purine metabolism; AMP biosynthesis via salvage pathway; AMP from adenine: step 1/1. Functionally, catalyzes a salvage reaction resulting in the formation of AMP, that is energically less costly than de novo synthesis. This Mycoplasmopsis synoviae (strain 53) (Mycoplasma synoviae) protein is Adenine phosphoribosyltransferase.